The following is a 109-amino-acid chain: UPF0060 membrane protein RHA1_ro06609 (109 aa).

Transmembrane regions (helical) follow at residues 7-27, 33-53, 62-82, and 88-108; these read VALF…VWQG, GWIW…VATL, ILAA…MVAD, and RWDV…MYAP.

This sequence belongs to the UPF0060 family.

It localises to the cell membrane. This Rhodococcus jostii (strain RHA1) protein is UPF0060 membrane protein RHA1_ro06609.